We begin with the raw amino-acid sequence, 396 residues long: Phosphopentomutase (396 aa).

Mn(2+)-binding residues include Asp13, Asp288, His293, Asp329, His330, and His341.

Belongs to the phosphopentomutase family. Requires Mn(2+) as cofactor.

Its subcellular location is the cytoplasm. It catalyses the reaction 2-deoxy-alpha-D-ribose 1-phosphate = 2-deoxy-D-ribose 5-phosphate. It carries out the reaction alpha-D-ribose 1-phosphate = D-ribose 5-phosphate. Its pathway is carbohydrate degradation; 2-deoxy-D-ribose 1-phosphate degradation; D-glyceraldehyde 3-phosphate and acetaldehyde from 2-deoxy-alpha-D-ribose 1-phosphate: step 1/2. Its function is as follows. Isomerase that catalyzes the conversion of deoxy-ribose 1-phosphate (dRib-1-P) and ribose 1-phosphate (Rib-1-P) to deoxy-ribose 5-phosphate (dRib-5-P) and ribose 5-phosphate (Rib-5-P), respectively. The polypeptide is Phosphopentomutase (Clostridium perfringens (strain ATCC 13124 / DSM 756 / JCM 1290 / NCIMB 6125 / NCTC 8237 / Type A)).